The chain runs to 704 residues: Elongation factor G (704 aa).

The tr-type G domain occupies 8–290 (ARYRNIGISA…AVIDYLPSPV (283 aa)). Residues 17–24 (AHIDAGKT), 88–92 (DTPGH), and 142–145 (NKMD) each bind GTP. Residues lysine 504 and lysine 643 each carry the N6-acetyllysine modification.

Belongs to the TRAFAC class translation factor GTPase superfamily. Classic translation factor GTPase family. EF-G/EF-2 subfamily.

The protein localises to the cytoplasm. In terms of biological role, catalyzes the GTP-dependent ribosomal translocation step during translation elongation. During this step, the ribosome changes from the pre-translocational (PRE) to the post-translocational (POST) state as the newly formed A-site-bound peptidyl-tRNA and P-site-bound deacylated tRNA move to the P and E sites, respectively. Catalyzes the coordinated movement of the two tRNA molecules, the mRNA and conformational changes in the ribosome. The chain is Elongation factor G from Escherichia coli O17:K52:H18 (strain UMN026 / ExPEC).